The following is a 132-amino-acid chain: Large ribosomal subunit protein bL19 (132 aa).

This sequence belongs to the bacterial ribosomal protein bL19 family.

Functionally, this protein is located at the 30S-50S ribosomal subunit interface and may play a role in the structure and function of the aminoacyl-tRNA binding site. This Persephonella marina (strain DSM 14350 / EX-H1) protein is Large ribosomal subunit protein bL19.